The primary structure comprises 332 residues: tRNA N6-adenosine threonylcarbamoyltransferase (332 aa).

Positions 107 and 111 each coordinate Fe cation. Substrate is bound by residues 129–133, Asp162, Gly175, and Asn267; that span reads LVSGG. Residue Asp295 coordinates Fe cation.

It belongs to the KAE1 / TsaD family. The cofactor is Fe(2+).

The protein resides in the cytoplasm. The catalysed reaction is L-threonylcarbamoyladenylate + adenosine(37) in tRNA = N(6)-L-threonylcarbamoyladenosine(37) in tRNA + AMP + H(+). Required for the formation of a threonylcarbamoyl group on adenosine at position 37 (t(6)A37) in tRNAs that read codons beginning with adenine. Is involved in the transfer of the threonylcarbamoyl moiety of threonylcarbamoyl-AMP (TC-AMP) to the N6 group of A37, together with TsaE and TsaB. TsaD likely plays a direct catalytic role in this reaction. This Campylobacter hominis (strain ATCC BAA-381 / DSM 21671 / CCUG 45161 / LMG 19568 / NCTC 13146 / CH001A) protein is tRNA N6-adenosine threonylcarbamoyltransferase.